The sequence spans 38 residues: Plastocyanin (38 aa).

Residues 1 to 38 form the Plastocyanin-like domain; it reads AQTVEVKMGADGGLLVFEPAKAGPHNVVFDEDNIPPGV. Cu cation is bound at residue His-25.

The protein belongs to the plastocyanin family. Cu(2+) serves as cofactor.

Its subcellular location is the plastid. The protein resides in the chloroplast thylakoid membrane. Participates in electron transfer between P700 and the cytochrome b6-f complex in photosystem I. The chain is Plastocyanin (PETE) from Thalassiosira oceanica (Marine diatom).